The following is a 348-amino-acid chain: Phosphate acyltransferase (348 aa).

It belongs to the PlsX family. Homodimer. Probably interacts with PlsY.

The protein resides in the cytoplasm. The catalysed reaction is a fatty acyl-[ACP] + phosphate = an acyl phosphate + holo-[ACP]. It functions in the pathway lipid metabolism; phospholipid metabolism. Catalyzes the reversible formation of acyl-phosphate (acyl-PO(4)) from acyl-[acyl-carrier-protein] (acyl-ACP). This enzyme utilizes acyl-ACP as fatty acyl donor, but not acyl-CoA. The protein is Phosphate acyltransferase of Neisseria gonorrhoeae (strain ATCC 700825 / FA 1090).